Reading from the N-terminus, the 97-residue chain is MNIMLFCSVFILVSLTGLSVSDDVPGNYPMSLYGNKYSCGVLGENEYCRKICKSHGVNYGYCFNSRCWCEYLEDKDVDFWAAHKNHCKNGKLYPPKK.

Residues 1–21 (MNIMLFCSVFILVSLTGLSVS) form the signal peptide. An LCN-type CS-alpha/beta domain is found at 25-88 (PGNYPMSLYG…FWAAHKNHCK (64 aa)). 3 disulfide bridges follow: Cys39-Cys62, Cys48-Cys67, and Cys52-Cys69.

This sequence belongs to the long (3 C-C) scorpion toxin superfamily. As to quaternary structure, monomer (edited version) and heterodimer (non-edited version) of this alpha chain and a beta chain (AC P0CI43). In terms of tissue distribution, expressed by the venom gland.

The protein resides in the secreted. In terms of biological role, the heterodimer non-edited LVP1 induces lipolysis in rat adipocytes. Induction of lipolysis by LVP1 appears to be mediated through the beta-2 adrenergic receptor pathway (ADRB2). Functionally, the edited BmKBTx-like, similar to beta-toxins, may modulate voltage-gated sodium channels (Nav) and may block voltage-gated potassium channels (Kv). In Lychas mucronatus (Chinese swimming scorpion), this protein is Lipolysis-activating peptide 1-alpha chain.